The sequence spans 174 residues: MFIKVKLPWDVTIPAEDMDTGLMLQRAIVIRLLEAFSKEKATKDLGYLITPTILENIGEGKIKEQTGEIQFPVVFNGICFKMFKGEIVHGVVHKVHKTGVFLKSGPYEIIYLSHMKMPGYEFIPGENPFFMNQYMSRIQIGARVRFVVLDTEWREAEKDFMALASIDGDNLGPF.

This sequence belongs to the eukaryotic RPB7/RPC8 RNA polymerase subunit family. In terms of assembly, component of the RNA polymerase IV complex. Interacts with NRPD1.

It localises to the nucleus. In terms of biological role, DNA-dependent RNA polymerase catalyzes the transcription of DNA into RNA using the four ribonucleoside triphosphates as substrates. Component of RNA polymerase IV which mediates 24-nt short-interfering RNAs (siRNA) accumulation. Implicated in siRNA-directed heterochromatin formation through the action of DCL3 and AGO4, and subsequent DNA methylation-dependent silencing of targeted sequences. Essential component of a self-reinforcing loop coupling de novo DNA methylation to siRNA production. Required for intercellular but not intracellular RNA interference (RNAi) leading to systemic post-transcriptional gene silencing. Involved in the maintenance of post-transcriptional RNA silencing. This Arabidopsis thaliana (Mouse-ear cress) protein is DNA-directed RNA polymerase IV subunit 7 (NRPD7).